The following is a 152-amino-acid chain: uncharacterized protein (152 aa).

Transmembrane regions (helical) follow at residues Ile-15–Ile-35, Leu-43–Thr-63, and Thr-117–Ile-137.

This sequence to M.jannaschii MJ0129 and MJ0587.

The protein localises to the cell membrane. This is an uncharacterized protein from Methanocaldococcus jannaschii (strain ATCC 43067 / DSM 2661 / JAL-1 / JCM 10045 / NBRC 100440) (Methanococcus jannaschii).